We begin with the raw amino-acid sequence, 516 residues long: rRNA N(6)-adenosine-methyltransferase ZCCHC4 (516 aa).

Zn(2+)-binding residues include Cys40, His42, Cys66, Cys75, Cys127, Cys130, His142, and His145. The segment at 40–84 (CPHELGPTLLFVKVNQGKEETRRFYACSACRDRKDCNFFQWEDEK) adopts a GRF-type zinc-finger fold. S-adenosyl-L-methionine-binding positions include 174-177 (QYLF), Arg204, Asp227, 245-246 (NM), and Asp278. A regulatory loop region spans residues 339–360 (QVVDYDNHALYKHGKTGRKQSP). Zn(2+) is bound by residues Cys383, Cys386, His396, Cys397, Cys400, Cys403, His413, Cys414, Cys417, Cys420, His427, Cys428, Cys431, Cys434, His439, and Cys441. Residues 398 to 448 (EHCNSCTSKDGRKWNHCFLCKKCVKPSWIHCSICNHCALPDHSCKGPKDGC) form the DHHC domain. The segment at 446–463 (DGCFICGELDHKRSACPN) adopts a CCHC-type zinc-finger fold. A compositionally biased stretch (basic residues) spans 472–484 (KAVRKQKQRKSNK). Positions 472–516 (KAVRKQKQRKSNKMKMETTKGQSMNHTSATRKKKRRERTHQYLCS) are disordered. Over residues 490–499 (TKGQSMNHTS) the composition is skewed to polar residues. Basic residues predominate over residues 500-509 (ATRKKKRRER).

It belongs to the ZCCHC4 family. In terms of assembly, interacts with components of the ASC-1 complex TRIP4, ASCC1, ASCC2 and ASCC3. Interact with AHCYL1 and AHCYL2. Interact with YTHDC2.

It is found in the cytoplasm. It localises to the nucleus. The protein resides in the nucleolus. The enzyme catalyses adenosine(4220) in 28S rRNA + S-adenosyl-L-methionine = N(6)-methyladenosine(4220) in 28S rRNA + S-adenosyl-L-homocysteine + H(+). Its function is as follows. rRNA N6-methyltransferase that specifically methylates the adenine in position 4220 of 28S rRNA. N6-methylation of adenine(4220) in 28S rRNA is required for translation. The polypeptide is rRNA N(6)-adenosine-methyltransferase ZCCHC4 (Bos taurus (Bovine)).